The chain runs to 27 residues: Vasotocin-neurophysin VT (27 aa).

A disulfide bridge links C1 with C6. Residue G9 is modified to Glycine amide.

This sequence belongs to the vasopressin/oxytocin family.

Its function is as follows. Vasotocin is an antidiuretic hormone. This Sclerophrys regularis (Common African toad) protein is Vasotocin-neurophysin VT.